A 305-amino-acid chain; its full sequence is Mas-related G-protein coupled receptor member A7 (305 aa).

At 1-17 the chain is on the extracellular side; it reads MDETSPRSIDIESLIPN. The helical transmembrane segment at 18-38 threads the bilayer; sequence LMIIIFGLVGLTGNAIVLWLL. Residues 39-46 lie on the Cytoplasmic side of the membrane; sequence GFCLHRNA. A helical membrane pass occupies residues 47–67; sequence FLVYILNLALADFLFLLCHFI. Residues 68-81 are Extracellular-facing; sequence NSAMFLLKVPIPNG. A helical membrane pass occupies residues 82 to 102; it reads IFVYCFYTIKMVLYITGLSML. The Cytoplasmic segment spans residues 103-129; that stretch reads SAISTERCLSVLCPIWYHCRRPEHTST. The helical transmembrane segment at 130-150 threads the bilayer; that stretch reads VMCAVIWIFSVLICILKEYFC. The Extracellular portion of the chain corresponds to 151-167; that stretch reads DFFGTKLGNYYVCQASN. Residues 168 to 188 form a helical membrane-spanning segment; that stretch reads FFMGAYLMFLFVVLCLSTLAL. Residues 189 to 211 are Cytoplasmic-facing; the sequence is LARLFCGAEKMKFTRLFVTIMLT. A helical transmembrane segment spans residues 212 to 232; the sequence is ILVFLLCGLPWGFFWFLLIWI. Residues 233–244 lie on the Extracellular side of the membrane; the sequence is KGGFSVLDYRLY. The helical transmembrane segment at 245–265 threads the bilayer; that stretch reads LASIVLTVVNSCANPIIYFFV. Residues 266 to 305 lie on the Cytoplasmic side of the membrane; it reads GSFRHRLKHQTLKMVLQSALQDTPETHENMVEMSRIKAEQ.

Belongs to the G-protein coupled receptor 1 family. Mas subfamily. In terms of tissue distribution, expressed in a subset of sensory neurons that includes nociceptors. Expressed in the subclass of non-peptidergic sensory neurons that are IB4(+) and VR1(-).

The protein resides in the cell membrane. Functionally, orphan receptor. May be a receptor for RFamide-family neuropeptides such as NPFF and NPAF, which are analgesic in vivo. May regulate nociceptor function and/or development, including the sensation or modulation of pain. This is Mas-related G-protein coupled receptor member A7 (Mrgpra7) from Mus musculus (Mouse).